Here is a 382-residue protein sequence, read N- to C-terminus: Homoserine O-succinyltransferase (382 aa).

The region spanning 51 to 359 (NAILVCHALS…EATQGHDAFL (309 aa)) is the AB hydrolase-1 domain. The active-site Nucleophile is S157. Substrate is bound at residue R227. Residues D322 and H355 contribute to the active site. A substrate-binding site is contributed by D356.

It belongs to the AB hydrolase superfamily. MetX family. In terms of assembly, homodimer.

It localises to the cytoplasm. It catalyses the reaction L-homoserine + succinyl-CoA = O-succinyl-L-homoserine + CoA. It functions in the pathway amino-acid biosynthesis; L-methionine biosynthesis via de novo pathway; O-succinyl-L-homoserine from L-homoserine: step 1/1. Transfers a succinyl group from succinyl-CoA to L-homoserine, forming succinyl-L-homoserine. The chain is Homoserine O-succinyltransferase from Halorhodospira halophila (strain DSM 244 / SL1) (Ectothiorhodospira halophila (strain DSM 244 / SL1)).